The chain runs to 504 residues: Maturase K (504 aa).

Belongs to the intron maturase 2 family. MatK subfamily.

It localises to the plastid. It is found in the chloroplast. In terms of biological role, usually encoded in the trnK tRNA gene intron. Probably assists in splicing its own and other chloroplast group II introns. The chain is Maturase K from Amaranthus caudatus (Love-lies-bleeding).